A 114-amino-acid polypeptide reads, in one-letter code: Small ribosomal subunit protein uS17 (114 aa).

Belongs to the universal ribosomal protein uS17 family. In terms of assembly, part of the 30S ribosomal subunit.

Functionally, one of the primary rRNA binding proteins, it binds specifically to the 5'-end of 16S ribosomal RNA. The sequence is that of Small ribosomal subunit protein uS17 from Aeropyrum pernix (strain ATCC 700893 / DSM 11879 / JCM 9820 / NBRC 100138 / K1).